The sequence spans 296 residues: Acetyl-coenzyme A carboxylase carboxyl transferase subunit beta (296 aa).

The region spanning 25-294 (VWTKCTSCEQ…PFVEPELISE (270 aa)) is the CoA carboxyltransferase N-terminal domain. Zn(2+) is bound by residues C29, C32, C48, and C51. A C4-type zinc finger spans residues 29 to 51 (CTSCEQVLYSEELKRNLYVCPKC).

This sequence belongs to the AccD/PCCB family. As to quaternary structure, acetyl-CoA carboxylase is a heterohexamer composed of biotin carboxyl carrier protein (AccB), biotin carboxylase (AccC) and two subunits each of ACCase subunit alpha (AccA) and ACCase subunit beta (AccD). Zn(2+) serves as cofactor.

It localises to the cytoplasm. The catalysed reaction is N(6)-carboxybiotinyl-L-lysyl-[protein] + acetyl-CoA = N(6)-biotinyl-L-lysyl-[protein] + malonyl-CoA. The protein operates within lipid metabolism; malonyl-CoA biosynthesis; malonyl-CoA from acetyl-CoA: step 1/1. In terms of biological role, component of the acetyl coenzyme A carboxylase (ACC) complex. Biotin carboxylase (BC) catalyzes the carboxylation of biotin on its carrier protein (BCCP) and then the CO(2) group is transferred by the transcarboxylase to acetyl-CoA to form malonyl-CoA. The chain is Acetyl-coenzyme A carboxylase carboxyl transferase subunit beta from Haemophilus influenzae (strain PittEE).